The primary structure comprises 200 residues: Recombination protein RecR (200 aa).

The C4-type zinc finger occupies 59–74 (CSTCGNIDSQNPCTVC). Positions 82–177 (SIIVVVADVA…KVTRLAHGVP (96 aa)) constitute a Toprim domain.

Belongs to the RecR family.

In terms of biological role, may play a role in DNA repair. It seems to be involved in an RecBC-independent recombinational process of DNA repair. It may act with RecF and RecO. The protein is Recombination protein RecR of Rhodopseudomonas palustris (strain ATCC BAA-98 / CGA009).